The sequence spans 169 residues: S-ribosylhomocysteine lyase (169 aa).

His-54, His-58, and Cys-128 together coordinate Fe cation.

The protein belongs to the LuxS family. Homodimer. Requires Fe cation as cofactor.

It carries out the reaction S-(5-deoxy-D-ribos-5-yl)-L-homocysteine = (S)-4,5-dihydroxypentane-2,3-dione + L-homocysteine. In terms of biological role, involved in the synthesis of autoinducer 2 (AI-2) which is secreted by bacteria and is used to communicate both the cell density and the metabolic potential of the environment. The regulation of gene expression in response to changes in cell density is called quorum sensing. Catalyzes the transformation of S-ribosylhomocysteine (RHC) to homocysteine (HC) and 4,5-dihydroxy-2,3-pentadione (DPD). The polypeptide is S-ribosylhomocysteine lyase (Tolumonas auensis (strain DSM 9187 / NBRC 110442 / TA 4)).